Consider the following 79-residue polypeptide: Large ribosomal subunit protein bL28 (79 aa).

Positions 1-26 (MAKVCQVTGKRPQSGNNVSHANKKTN) are disordered. Residues 11 to 20 (RPQSGNNVSH) are compositionally biased toward polar residues.

It belongs to the bacterial ribosomal protein bL28 family.

This is Large ribosomal subunit protein bL28 from Coxiella burnetii (strain CbuK_Q154) (Coxiella burnetii (strain Q154)).